A 359-amino-acid polypeptide reads, in one-letter code: 3-dehydroquinate synthase (359 aa).

Residues 71-76 (DGEAHK), 105-109 (GVIGD), 129-130 (TT), Lys-142, Lys-151, and 169-172 (TLHT) contribute to the NAD(+) site. Zn(2+) contacts are provided by Glu-184, His-247, and His-264.

This sequence belongs to the sugar phosphate cyclases superfamily. Dehydroquinate synthase family. NAD(+) serves as cofactor. Requires Co(2+) as cofactor. It depends on Zn(2+) as a cofactor.

The protein localises to the cytoplasm. It carries out the reaction 7-phospho-2-dehydro-3-deoxy-D-arabino-heptonate = 3-dehydroquinate + phosphate. The protein operates within metabolic intermediate biosynthesis; chorismate biosynthesis; chorismate from D-erythrose 4-phosphate and phosphoenolpyruvate: step 2/7. Functionally, catalyzes the conversion of 3-deoxy-D-arabino-heptulosonate 7-phosphate (DAHP) to dehydroquinate (DHQ). The sequence is that of 3-dehydroquinate synthase from Neisseria meningitidis serogroup A / serotype 4A (strain DSM 15465 / Z2491).